The chain runs to 249 residues: 4-hydroxy-tetrahydrodipicolinate reductase (249 aa).

NAD(+)-binding positions include 77-79 (ATT) and 101-104 (SYNT). Residue His133 is the Proton donor/acceptor of the active site. His134 contributes to the (S)-2,3,4,5-tetrahydrodipicolinate binding site. Lys137 serves as the catalytic Proton donor. 143–144 (GT) lines the (S)-2,3,4,5-tetrahydrodipicolinate pocket.

Belongs to the DapB family.

It is found in the cytoplasm. It catalyses the reaction (S)-2,3,4,5-tetrahydrodipicolinate + NAD(+) + H2O = (2S,4S)-4-hydroxy-2,3,4,5-tetrahydrodipicolinate + NADH + H(+). It carries out the reaction (S)-2,3,4,5-tetrahydrodipicolinate + NADP(+) + H2O = (2S,4S)-4-hydroxy-2,3,4,5-tetrahydrodipicolinate + NADPH + H(+). It functions in the pathway amino-acid biosynthesis; L-lysine biosynthesis via DAP pathway; (S)-tetrahydrodipicolinate from L-aspartate: step 4/4. In terms of biological role, catalyzes the conversion of 4-hydroxy-tetrahydrodipicolinate (HTPA) to tetrahydrodipicolinate. This chain is 4-hydroxy-tetrahydrodipicolinate reductase, found in Exiguobacterium sp. (strain ATCC BAA-1283 / AT1b).